The primary structure comprises 156 residues: Small ribosomal subunit protein uS7 (156 aa).

It belongs to the universal ribosomal protein uS7 family. As to quaternary structure, part of the 30S ribosomal subunit. Contacts proteins S9 and S11.

One of the primary rRNA binding proteins, it binds directly to 16S rRNA where it nucleates assembly of the head domain of the 30S subunit. Is located at the subunit interface close to the decoding center, probably blocks exit of the E-site tRNA. This is Small ribosomal subunit protein uS7 from Lachnospira eligens (strain ATCC 27750 / DSM 3376 / VPI C15-48 / C15-B4) (Eubacterium eligens).